Reading from the N-terminus, the 217-residue chain is Adenylate kinase (217 aa).

Gly10–Thr15 serves as a coordination point for ATP. The interval Ser30–Val59 is NMP. Residues Thr31, Arg36, Ala57–Val59, Gly85–Arg88, and Gln92 contribute to the AMP site. The tract at residues Gly126 to Asp163 is LID. Arg127 serves as a coordination point for ATP. Residues Cys130 and Cys133 each coordinate Zn(2+). An ATP-binding site is contributed by Ser136–Tyr137. Residues Cys150 and Asp153 each coordinate Zn(2+). The AMP site is built by Arg160 and Arg171. Gln199 contributes to the ATP binding site.

It belongs to the adenylate kinase family. As to quaternary structure, monomer.

It localises to the cytoplasm. It catalyses the reaction AMP + ATP = 2 ADP. It functions in the pathway purine metabolism; AMP biosynthesis via salvage pathway; AMP from ADP: step 1/1. In terms of biological role, catalyzes the reversible transfer of the terminal phosphate group between ATP and AMP. Plays an important role in cellular energy homeostasis and in adenine nucleotide metabolism. The chain is Adenylate kinase from Lysinibacillus sphaericus (strain C3-41).